Here is a 728-residue protein sequence, read N- to C-terminus: Ribosome biogenesis protein bop1-A (728 aa).

The segment at 1-114 (MKRGSQGEAG…ENDSSDEEDI (114 aa)) is disordered. Residues 55–67 (SDDEEDHWSEEEE) show a composition bias toward acidic residues. A compositionally biased stretch (basic and acidic residues) spans 68 to 77 (NPGKSPKEII). WD repeat units follow at residues 393 to 432 (GHKD…CMKS), 434 to 474 (VLEG…RLLC), 514 to 556 (KHQK…SQNP), 559 to 597 (KNKG…LTKK), 600 to 639 (TNCK…KPYK), 643 to 682 (HHKK…DLLQ), and 698 to 728 (HRDL…RLFT).

This sequence belongs to the WD repeat BOP1/ERB1 family. As to quaternary structure, component of the PeBoW complex, composed of bop1, pes1 and wdr12. The complex is held together by bop1, which interacts with pes1 via its N-terminal domain and with wdr12 via a high-affinity interaction between the seven-bladed beta-propeller domains of the 2 proteins. The PeBoW complex associates with the 66S pre-ribosome.

The protein localises to the nucleus. It localises to the nucleolus. Its subcellular location is the nucleoplasm. Its function is as follows. Component of the PeBoW complex, which is required for maturation of 28S and 5.8S ribosomal RNAs and formation of the 60S ribosome. In Xenopus laevis (African clawed frog), this protein is Ribosome biogenesis protein bop1-A (bop1-a).